The following is a 372-amino-acid chain: Alanine dehydrogenase 2 (372 aa).

Residue H95 is part of the active site. 169–199 is a binding site for NAD(+); sequence KVTIIGGGQAGTNAAKIALGLGADVTILDVN.

The protein belongs to the AlaDH/PNT family.

The catalysed reaction is L-alanine + NAD(+) + H2O = pyruvate + NH4(+) + NADH + H(+). Its pathway is amino-acid degradation; L-alanine degradation via dehydrogenase pathway; NH(3) and pyruvate from L-alanine: step 1/1. Functionally, may play a role in cell wall synthesis as L-alanine is an important constituent of the peptidoglycan layer. This chain is Alanine dehydrogenase 2 (ald2), found in Staphylococcus aureus (strain MRSA252).